The sequence spans 1609 residues: Probable cation-transporting ATPase I (1609 aa).

A run of 10 helical transmembrane segments spans residues 30-50 (GAVN…WPVV), 176-196 (LAIL…SAAV), 238-258 (IALS…GTPL), 357-377 (LIAA…AGAI), 641-661 (VHLA…ASAG), 673-693 (WFSP…VSAS), 778-798 (ILAV…ALLV), 921-941 (LFEG…ATGV), 969-989 (TSKV…LALL), and 997-1017 (AVAD…PLVA). Aspartate 1053 (4-aspartylphosphate intermediate) is an active-site residue. 2 residues coordinate Mg(2+): aspartate 1335 and aspartate 1339. The next 2 helical transmembrane spans lie at 1396–1416 (ILVG…VFGA) and 1426–1446 (LLLV…VTSQ). Residues 1447 to 1476 (YEEPGEDEYQTDEEADEARRTHQHEVLTGP) form a disordered region. Positions 1449-1462 (EPGEDEYQTDEEAD) are enriched in acidic residues. 2 helical membrane-spanning segments follow: residues 1542–1562 (VVAT…TPVI) and 1573–1593 (PIAW…SVLA).

This sequence belongs to the cation transport ATPase (P-type) (TC 3.A.3) family.

The protein localises to the cell membrane. It catalyses the reaction ATP + H2O = ADP + phosphate + H(+). The protein is Probable cation-transporting ATPase I (ctpI) of Mycobacterium leprae (strain TN).